We begin with the raw amino-acid sequence, 79 residues long: MKMNPCTVILCKSLFFFCLFQVDCYCNRKNIQNQSSRIATKIKRSYWFRWQKHIILANIHKIIKAYQRSIIKLPVTKGL.

The first 24 residues, 1 to 24, serve as a signal peptide directing secretion; sequence MKMNPCTVILCKSLFFFCLFQVDC. Asn33 carries an N-linked (GlcNAc...) asparagine glycan.

Its subcellular location is the secreted. This is an uncharacterized protein from Saccharomyces cerevisiae (strain ATCC 204508 / S288c) (Baker's yeast).